The chain runs to 253 residues: Ubiquinone/menaquinone biosynthesis C-methyltransferase UbiE (253 aa).

S-adenosyl-L-methionine contacts are provided by residues threonine 76, aspartate 97, and 125-126 (NA).

The protein belongs to the class I-like SAM-binding methyltransferase superfamily. MenG/UbiE family.

It carries out the reaction a 2-demethylmenaquinol + S-adenosyl-L-methionine = a menaquinol + S-adenosyl-L-homocysteine + H(+). The catalysed reaction is a 2-methoxy-6-(all-trans-polyprenyl)benzene-1,4-diol + S-adenosyl-L-methionine = a 5-methoxy-2-methyl-3-(all-trans-polyprenyl)benzene-1,4-diol + S-adenosyl-L-homocysteine + H(+). The protein operates within quinol/quinone metabolism; menaquinone biosynthesis; menaquinol from 1,4-dihydroxy-2-naphthoate: step 2/2. Its pathway is cofactor biosynthesis; ubiquinone biosynthesis. Functionally, methyltransferase required for the conversion of demethylmenaquinol (DMKH2) to menaquinol (MKH2) and the conversion of 2-polyprenyl-6-methoxy-1,4-benzoquinol (DDMQH2) to 2-polyprenyl-3-methyl-6-methoxy-1,4-benzoquinol (DMQH2). The chain is Ubiquinone/menaquinone biosynthesis C-methyltransferase UbiE from Rhodopseudomonas palustris (strain BisB5).